The following is a 709-amino-acid chain: Protein white (709 aa).

The segment at 1–35 is disordered; it reads MTINTDDQYADGESKTTISSNRRYSTSSFQDQSME. Positions 15 to 32 are enriched in polar residues; the sequence is KTTISSNRRYSTSSFQDQ. The ABC transporter domain maps to 103-348; sequence FTRQRLVKDF…SQLGIPCPPN (246 aa). Residues 136–143 and 292–299 each bind ATP; these read GSSGAGKT and GMAMKGKT. The helical transmembrane segment at 457–475 threads the bilayer; sequence LLQTAMVASLIGSIYFGQV. Residue N485 is glycosylated (N-linked (GlcNAc...) asparagine). The next 4 helical transmembrane spans lie at 487-507, 537-555, 564-585, and 598-616; these read SLFL…INVF, LPLF…YPMI, YLTT…GYLI, and VGPP…FLNS. N658 carries N-linked (GlcNAc...) asparagine glycosylation. A helical transmembrane segment spans residues 681–700; it reads LDIGCLFALIVLFRLGALFC.

Belongs to the ABC transporter superfamily. ABCG family. Eye pigment precursor importer (TC 3.A.1.204) subfamily.

It is found in the membrane. May be part of a membrane-spanning permease system necessary for the transport of pigment precursors into pigment cells responsible for eye color. The chain is Protein white (W) from Anopheles albimanus (New world malaria mosquito).